The primary structure comprises 341 residues: Phosphoribosylformylglycinamidine cyclo-ligase (341 aa).

The protein belongs to the AIR synthase family.

Its subcellular location is the cytoplasm. The catalysed reaction is 2-formamido-N(1)-(5-O-phospho-beta-D-ribosyl)acetamidine + ATP = 5-amino-1-(5-phospho-beta-D-ribosyl)imidazole + ADP + phosphate + H(+). It participates in purine metabolism; IMP biosynthesis via de novo pathway; 5-amino-1-(5-phospho-D-ribosyl)imidazole from N(2)-formyl-N(1)-(5-phospho-D-ribosyl)glycinamide: step 2/2. The protein is Phosphoribosylformylglycinamidine cyclo-ligase of Agathobacter rectalis (strain ATCC 33656 / DSM 3377 / JCM 17463 / KCTC 5835 / VPI 0990) (Eubacterium rectale).